The following is a 100-amino-acid chain: NADH-quinone oxidoreductase subunit K 1 (100 aa).

The next 3 membrane-spanning stretches (helical) occupy residues 4-24 (LHSY…GVLV), 29-49 (IVIF…FIAL), and 60-80 (IFVF…LALM).

Belongs to the complex I subunit 4L family. In terms of assembly, NDH-1 is composed of 14 different subunits. Subunits NuoA, H, J, K, L, M, N constitute the membrane sector of the complex.

Its subcellular location is the cell inner membrane. The catalysed reaction is a quinone + NADH + 5 H(+)(in) = a quinol + NAD(+) + 4 H(+)(out). In terms of biological role, NDH-1 shuttles electrons from NADH, via FMN and iron-sulfur (Fe-S) centers, to quinones in the respiratory chain. The immediate electron acceptor for the enzyme in this species is believed to be ubiquinone. Couples the redox reaction to proton translocation (for every two electrons transferred, four hydrogen ions are translocated across the cytoplasmic membrane), and thus conserves the redox energy in a proton gradient. This is NADH-quinone oxidoreductase subunit K 1 from Geobacter sulfurreducens (strain ATCC 51573 / DSM 12127 / PCA).